A 74-amino-acid chain; its full sequence is Insertion element IS986 uncharacterized 8.2 kDa protein (74 aa).

In Mycobacterium tuberculosis, this protein is Insertion element IS986 uncharacterized 8.2 kDa protein.